The primary structure comprises 1118 residues: Protein argonaute 1B (1118 aa).

Disordered regions lie at residues 1–175 (MALQ…SRTV) and 188–246 (APMV…RFPL). Basic residues predominate over residues 10–24 (PHHHQVPIMVKKKRT). A compositionally biased stretch (low complexity) spans 25 to 35 (GSGSTGESSGE). 3 stretches are compositionally biased toward gly residues: residues 54–92 (QHGG…HHPG), 100–110 (GRGGPGSHHPG), and 118–128 (GRGGSGSHHPG). Composition is skewed to low complexity over residues 148–157 (RGGMPQPYYG) and 193–219 (PTPS…QFQQ). Over residues 220 to 241 (LATRDQSSTSQAIQIAPPSSKS) the composition is skewed to polar residues. Positions 457 to 570 (PVIDFVAQLL…LPMEVCKIVE (114 aa)) constitute a PAZ domain. A Piwi domain is found at 746–1067 (LLIVILPDNN…AAFRARFYME (322 aa)).

It belongs to the argonaute family. Ago subfamily.

Probably involved in the RNA silencing pathway. May bind to short RNAs such as microRNAs (miRNAs) or short interfering RNAs (siRNAs), and represses the translation of mRNAs which are complementary to them. The polypeptide is Protein argonaute 1B (AGO1B) (Oryza sativa subsp. japonica (Rice)).